The sequence spans 68 residues: Small ribosomal subunit protein bS21 (68 aa).

A disordered region spans residues 36–68; sequence YEKPSEKRARERAAAVRRSRKLERKRAERDGIR. Positions 37–49 are enriched in basic and acidic residues; it reads EKPSEKRARERAA. Positions 50–59 are enriched in basic residues; the sequence is AVRRSRKLER.

Belongs to the bacterial ribosomal protein bS21 family.

The chain is Small ribosomal subunit protein bS21 from Zymomonas mobilis subsp. mobilis (strain ATCC 31821 / ZM4 / CP4).